The primary structure comprises 615 residues: Elongation factor 4 (615 aa).

The tr-type G domain maps to 14-200; sequence SKIRNFCIIA…KVAELIPAPT (187 aa). GTP contacts are provided by residues 26–31 and 147–150; these read DHGKST and NKID.

It belongs to the TRAFAC class translation factor GTPase superfamily. Classic translation factor GTPase family. LepA subfamily.

The protein localises to the cell membrane. It carries out the reaction GTP + H2O = GDP + phosphate + H(+). Its function is as follows. Required for accurate and efficient protein synthesis under certain stress conditions. May act as a fidelity factor of the translation reaction, by catalyzing a one-codon backward translocation of tRNAs on improperly translocated ribosomes. Back-translocation proceeds from a post-translocation (POST) complex to a pre-translocation (PRE) complex, thus giving elongation factor G a second chance to translocate the tRNAs correctly. Binds to ribosomes in a GTP-dependent manner. The protein is Elongation factor 4 of Corynebacterium aurimucosum (strain ATCC 700975 / DSM 44827 / CIP 107346 / CN-1) (Corynebacterium nigricans).